The following is a 240-amino-acid chain: tRNA (guanine-N(1)-)-methyltransferase (240 aa).

S-adenosyl-L-methionine contacts are provided by residues glycine 111 and isoleucine 130–isoleucine 135.

It belongs to the RNA methyltransferase TrmD family. In terms of assembly, homodimer.

The protein resides in the cytoplasm. It carries out the reaction guanosine(37) in tRNA + S-adenosyl-L-methionine = N(1)-methylguanosine(37) in tRNA + S-adenosyl-L-homocysteine + H(+). Functionally, specifically methylates guanosine-37 in various tRNAs. This chain is tRNA (guanine-N(1)-)-methyltransferase, found in Mycoplasma mycoides subsp. mycoides SC (strain CCUG 32753 / NCTC 10114 / PG1).